Reading from the N-terminus, the 310-residue chain is Alpha/beta hydrolase domain-containing protein 17A (310 aa).

The tract at residues 38–61 is disordered; the sequence is VPEPEPGPGGAGAAPSGPLRTSAA. Catalysis depends on charge relay system residues serine 190, aspartate 255, and histidine 284. A Phosphoserine modification is found at serine 307.

Belongs to the AB hydrolase superfamily. ABHD17 family. In terms of processing, palmitoylated on cysteine residues located in a cysteine cluster at the N-terminus which promotes membrane localization. Palmitoylation is required for post-synaptic localization and for depalmitoylating activity towards DLG4/PSD95.

It is found in the cell membrane. Its subcellular location is the endosome membrane. The protein resides in the cell projection. It localises to the dendritic spine. The protein localises to the postsynaptic density membrane. It catalyses the reaction S-hexadecanoyl-L-cysteinyl-[protein] + H2O = L-cysteinyl-[protein] + hexadecanoate + H(+). Its function is as follows. Hydrolyzes fatty acids from S-acylated cysteine residues in proteins. Has depalmitoylating activity towards NRAS. Has depalmitoylating activity towards DLG4/PSD95. May have depalmitoylating activity towars MAP6. This chain is Alpha/beta hydrolase domain-containing protein 17A, found in Mus musculus (Mouse).